The primary structure comprises 593 residues: Efflux pump FUBT (593 aa).

A disordered region spans residues 1–44 (MAIDPQPSSPSLSSETIANDTIGNDNNVNEPSVEPKTQENQHTV). Residues 9-30 (SPSLSSETIANDTIGNDNNVNE) show a composition bias toward polar residues. N19 carries an N-linked (GlcNAc...) asparagine glycan. The next 12 helical transmembrane spans lie at 98-118 (WAFV…SSAY), 135-155 (VATL…LIWA), 167-187 (FFFT…AGSI), 195-215 (FLTG…IADM), 227-247 (MFSG…GFLG), 254-274 (WLHG…TVFI), 337-357 (IYIS…PIVF), 367-387 (IGGL…ISFA), 410-430 (LPPA…FAWT), 438-458 (IVPI…FMAL), 468-488 (IFAA…GAAF), and 503-523 (WASS…FLFY). The tract at residues 570–593 (THNSHASAAHSHGHRRSLSYTRSV) is disordered.

Belongs to the major facilitator superfamily. DHA1 family. Polyamines/proton antiporter (TC 2.A.1.2.16) subfamily.

The protein resides in the cell membrane. In terms of biological role, efflux pump involved in export of fusaric acid, a mycotoxin with low to moderate toxicity to animals and humans, but with high phytotoxic properties. Constitutes a self-protecting mechanism of the fungus against critical levels of FSA within the cell. This Fusarium oxysporum (Fusarium vascular wilt) protein is Efflux pump FUBT.